The primary structure comprises 147 residues: Nucleoside diphosphate kinase (147 aa).

Residues K9, F57, R85, T91, R102, and N112 each coordinate ATP. The active-site Pros-phosphohistidine intermediate is the H115.

The protein belongs to the NDK family. As to quaternary structure, homotetramer. It depends on Mg(2+) as a cofactor.

The protein resides in the cytoplasm. It carries out the reaction a 2'-deoxyribonucleoside 5'-diphosphate + ATP = a 2'-deoxyribonucleoside 5'-triphosphate + ADP. The catalysed reaction is a ribonucleoside 5'-diphosphate + ATP = a ribonucleoside 5'-triphosphate + ADP. Major role in the synthesis of nucleoside triphosphates other than ATP. The ATP gamma phosphate is transferred to the NDP beta phosphate via a ping-pong mechanism, using a phosphorylated active-site intermediate. This chain is Nucleoside diphosphate kinase, found in Thermosipho melanesiensis (strain DSM 12029 / CIP 104789 / BI429).